A 398-amino-acid polypeptide reads, in one-letter code: Metalloprotease MmpA (398 aa).

His22 provides a ligand contact to Zn(2+). Residue Glu23 is part of the active site. His26 serves as a coordination point for Zn(2+). 3 consecutive transmembrane segments (helical) span residues 117–139 (FIAV…VILV), 316–338 (QFWL…IPVL), and 362–381 (AAGF…FAAW). Positions 130–203 (AILVFAVILV…MPIDFAVERD (74 aa)) constitute a PDZ domain.

Belongs to the peptidase M50B family. Zn(2+) is required as a cofactor.

It is found in the cell inner membrane. Functionally, involved in the regulated intramembrane proteolysis (RIP) of the short isoform of PodJ protein (PodJS), during the swarmer-to-stalked transition. The cleavage occurs near or within the single transmembrane of PodJS thereby releasing the N-terminal segment into the cytoplasm for subsequent degradation. It contributes to preserve asymmetry in the next cell cycle through sequential degradation. The chain is Metalloprotease MmpA (mmpA) from Caulobacter vibrioides (strain ATCC 19089 / CIP 103742 / CB 15) (Caulobacter crescentus).